The sequence spans 238 residues: Ribonuclease PH (238 aa).

Phosphate-binding positions include Arg86 and 124–126 (GTR).

The protein belongs to the RNase PH family. As to quaternary structure, homohexameric ring arranged as a trimer of dimers.

The enzyme catalyses tRNA(n+1) + phosphate = tRNA(n) + a ribonucleoside 5'-diphosphate. Phosphorolytic 3'-5' exoribonuclease that plays an important role in tRNA 3'-end maturation. Removes nucleotide residues following the 3'-CCA terminus of tRNAs; can also add nucleotides to the ends of RNA molecules by using nucleoside diphosphates as substrates, but this may not be physiologically important. Probably plays a role in initiation of 16S rRNA degradation (leading to ribosome degradation) during starvation. The sequence is that of Ribonuclease PH from Yersinia enterocolitica serotype O:8 / biotype 1B (strain NCTC 13174 / 8081).